A 353-amino-acid polypeptide reads, in one-letter code: Histidinol-phosphate aminotransferase (353 aa).

Lys-209 bears the N6-(pyridoxal phosphate)lysine mark.

This sequence belongs to the class-II pyridoxal-phosphate-dependent aminotransferase family. Histidinol-phosphate aminotransferase subfamily. In terms of assembly, homodimer. It depends on pyridoxal 5'-phosphate as a cofactor.

The catalysed reaction is L-histidinol phosphate + 2-oxoglutarate = 3-(imidazol-4-yl)-2-oxopropyl phosphate + L-glutamate. Its pathway is amino-acid biosynthesis; L-histidine biosynthesis; L-histidine from 5-phospho-alpha-D-ribose 1-diphosphate: step 7/9. This is Histidinol-phosphate aminotransferase from Buchnera aphidicola subsp. Cinara cedri (strain Cc).